We begin with the raw amino-acid sequence, 223 residues long: UPF0441 protein YgiB (223 aa).

Residues 178 to 195 show a composition bias toward low complexity; the sequence is TVPKTAMAPKPATTTTVT. Residues 178-223 are disordered; that stretch reads TVPKTAMAPKPATTTTVTRGGFGESVAKQSTLQRSATGTSSRSMGG. The segment covering 204–223 has biased composition (polar residues); sequence AKQSTLQRSATGTSSRSMGG.

Belongs to the UPF0441 family.

This Escherichia coli (strain ATCC 8739 / DSM 1576 / NBRC 3972 / NCIMB 8545 / WDCM 00012 / Crooks) protein is UPF0441 protein YgiB.